Reading from the N-terminus, the 62-residue chain is Large ribosomal subunit protein uL30 (62 aa).

This sequence belongs to the universal ribosomal protein uL30 family. As to quaternary structure, part of the 50S ribosomal subunit.

This chain is Large ribosomal subunit protein uL30, found in Beutenbergia cavernae (strain ATCC BAA-8 / DSM 12333 / CCUG 43141 / JCM 11478 / NBRC 16432 / NCIMB 13614 / HKI 0122).